The following is a 110-amino-acid chain: DNA-binding protein Mhun_3016 (110 aa).

This sequence belongs to the PDCD5 family.

This is DNA-binding protein Mhun_3016 from Methanospirillum hungatei JF-1 (strain ATCC 27890 / DSM 864 / NBRC 100397 / JF-1).